A 98-amino-acid polypeptide reads, in one-letter code: NADH-ubiquinone oxidoreductase chain 4L (98 aa).

The next 3 membrane-spanning stretches (helical) occupy residues 1–21, 29–49, and 61–81; these read MPVV…GLLI, SLLC…VTVL, and IILL…LVMV.

It belongs to the complex I subunit 4L family. Core subunit of respiratory chain NADH dehydrogenase (Complex I) which is composed of 45 different subunits.

It is found in the mitochondrion inner membrane. It catalyses the reaction a ubiquinone + NADH + 5 H(+)(in) = a ubiquinol + NAD(+) + 4 H(+)(out). In terms of biological role, core subunit of the mitochondrial membrane respiratory chain NADH dehydrogenase (Complex I) which catalyzes electron transfer from NADH through the respiratory chain, using ubiquinone as an electron acceptor. Part of the enzyme membrane arm which is embedded in the lipid bilayer and involved in proton translocation. The protein is NADH-ubiquinone oxidoreductase chain 4L (MT-ND4L) of Helarctos malayanus (Malayan sun bear).